A 135-amino-acid polypeptide reads, in one-letter code: Histone H2A (135 aa).

It belongs to the histone H2A family. As to quaternary structure, the nucleosome is a histone octamer containing two molecules each of H2A, H2B, H3 and H4 assembled in one H3-H4 heterotetramer and two H2A-H2B heterodimers. The octamer wraps approximately 147 bp of DNA.

The protein localises to the nucleus. The protein resides in the chromosome. In terms of biological role, core component of nucleosome. Nucleosomes wrap and compact DNA into chromatin, limiting DNA accessibility to the cellular machineries which require DNA as a template. Histones thereby play a central role in transcription regulation, DNA repair, DNA replication and chromosomal stability. DNA accessibility is regulated via a complex set of post-translational modifications of histones, also called histone code, and nucleosome remodeling. This is Histone H2A from Trypanosoma cruzi.